The primary structure comprises 336 residues: Holliday junction branch migration complex subunit RuvB (336 aa).

A large ATPase domain (RuvB-L) region spans residues 1-175; the sequence is MEKYSFESVQ…FGMSFRLQFY (175 aa). Residues Leu14, Arg15, Gly56, Lys59, Thr60, Thr61, 122 to 124, Arg165, Tyr175, and Arg212 contribute to the ATP site; that span reads EDF. Position 60 (Thr60) interacts with Mg(2+). The segment at 176–253 is small ATPAse domain (RuvB-S); it reads EPKELSAIVI…CVRYALNELG (78 aa). Residues 256–336 form a head domain (RuvB-H) region; sequence ELGFDELDLR…IPFLEQKGLF (81 aa). Residues Arg310 and Arg315 each contribute to the DNA site.

The protein belongs to the RuvB family. In terms of assembly, homohexamer. Forms an RuvA(8)-RuvB(12)-Holliday junction (HJ) complex. HJ DNA is sandwiched between 2 RuvA tetramers; dsDNA enters through RuvA and exits via RuvB. An RuvB hexamer assembles on each DNA strand where it exits the tetramer. Each RuvB hexamer is contacted by two RuvA subunits (via domain III) on 2 adjacent RuvB subunits; this complex drives branch migration. In the full resolvosome a probable DNA-RuvA(4)-RuvB(12)-RuvC(2) complex forms which resolves the HJ.

Its subcellular location is the cytoplasm. It catalyses the reaction ATP + H2O = ADP + phosphate + H(+). Functionally, the RuvA-RuvB-RuvC complex processes Holliday junction (HJ) DNA during genetic recombination and DNA repair, while the RuvA-RuvB complex plays an important role in the rescue of blocked DNA replication forks via replication fork reversal (RFR). RuvA specifically binds to HJ cruciform DNA, conferring on it an open structure. The RuvB hexamer acts as an ATP-dependent pump, pulling dsDNA into and through the RuvAB complex. RuvB forms 2 homohexamers on either side of HJ DNA bound by 1 or 2 RuvA tetramers; 4 subunits per hexamer contact DNA at a time. Coordinated motions by a converter formed by DNA-disengaged RuvB subunits stimulates ATP hydrolysis and nucleotide exchange. Immobilization of the converter enables RuvB to convert the ATP-contained energy into a lever motion, pulling 2 nucleotides of DNA out of the RuvA tetramer per ATP hydrolyzed, thus driving DNA branch migration. The RuvB motors rotate together with the DNA substrate, which together with the progressing nucleotide cycle form the mechanistic basis for DNA recombination by continuous HJ branch migration. Branch migration allows RuvC to scan DNA until it finds its consensus sequence, where it cleaves and resolves cruciform DNA. The polypeptide is Holliday junction branch migration complex subunit RuvB (Helicobacter hepaticus (strain ATCC 51449 / 3B1)).